Consider the following 53-residue polypeptide: Conotoxin Cal6.23 (53 aa).

A signal peptide spans 1–22; sequence MKLTAVLMVAVLVLTACQLITA. 3 disulfides stabilise this stretch: cysteine 25/cysteine 40, cysteine 32/cysteine 47, and cysteine 39/cysteine 51.

It belongs to the conotoxin O1 superfamily. In terms of tissue distribution, expressed by the venom duct.

The protein localises to the secreted. Its function is as follows. Probable neurotoxin. The polypeptide is Conotoxin Cal6.23 (Californiconus californicus (California cone)).